We begin with the raw amino-acid sequence, 895 residues long: MSHTADIPLEAPTLLKLASSSVQSQINNDEYMETVILPVPLSQELFARFRNKWNIHNHGPAPVEHLGPPTDEPRPDQGNIDMIKQVFRIWSDSTRLPLEKLNLTGATVDDQIFVDLLHAHAHSITELDLTNVTGVTDLSNAYLYARSTHFPMLTSIRMTSMDLVTGHQPRRKNGIASTEFRALFMLGEEALAEARGQMERDGLRSPLSPSSQPSSIQSDHQSLDALVPCDSPVEPPLITARAPNVKRLFLPRCPAKRTTIDEEEQNTHVILTKILSPLQQLEVLDLSYWSKTDDMRCLQPLSNTLTCLILYDVPDLYHAVPNICHMTELRILDVSQSNRDSGLYPHPVTTLNKLIVSLKYLTHLDISSTNLATQPSSHDNPARYRESVRTDICGLQSLVRPLKYLGLFNCESASHVREIPAEVVSGDANEDQVITSLQMYKDRAGLLQNVLNESYQLYRFGNSNPLTRHTEALHLVLEAMHRHLADSTLQIAGSASLFYIIRKVDMNRDTKRRVVSALLSGMEVHMEEQVMVRNCCLSLCQFEIPQDILFDYSRLAVLLVSVLQHHNADNLTQRIVVFLLNSMACHVEGDQKVQVGSYGAIEMILDQIARKHTANVCDDVMEVGWSFLWNITDETPVNCELFLNANGLDLFQKCYEAFKTERELVRNMMGLIGNIAEVDELRSQLMKDDYVKIFCALLESQEESIEISYNSAGVLAHMVSDGEEVWKQMTVCRNEVMQRIVEATSSWKLATRRFINYRSFRPILRLLPLYHAYASQHWAVWALANLTTTDGEKYCAYVRDEGGVPLLEELVSNAITTTDIRTLANTVLENIRNVENKRNPKSIPADLAHSSNSPTFVPSYVSDVEEEDEGDVEADEEVQDFVNVDFDDYALPMEY.

Disordered regions lie at residues 58–78 and 195–221; these read HGPA…PDQG and RGQM…SDHQ. Positions 205–220 are enriched in low complexity; sequence SPLSPSSQPSSIQSDH.

As to quaternary structure, interacts with elc-1. Part of an E3 ubiquitin ligase complex including zer-11, cul-2 and elc-1.

In terms of biological role, acts as a target recruitment subunit in the E3 ubiquitin ligase complex zer-1-cul-2-elc-1. The protein is Zyg eleven-related protein 1 (zer-1) of Caenorhabditis elegans.